A 564-amino-acid polypeptide reads, in one-letter code: MFS-type transporter kojT (564 aa).

N-linked (GlcNAc...) asparagine glycosylation is present at Asn-113. The next 12 helical transmembrane spans lie at 120–140 (WATL…SSID), 159–179 (SLAT…AAPF), 187–207 (PVYI…GLAP), 217–237 (FLAG…MADI), 249–269 (VCCT…AFIG), 278–298 (WTEW…FLFV), 353–373 (IMVA…FGFL), 389–409 (GSVG…FAMV), 437–457 (LWFA…MGWT), 462–482 (ISYW…QGIF), 500–520 (ALVS…IVSI), and 530–550 (WSLT…YIFY).

Belongs to the major facilitator superfamily.

The protein resides in the cell membrane. Functionally, MFS-type transporter; part of the gene cluster that mediates the biosynthesis of 5-hydroxy-2-hydroxymethyl-1,4-pyrone, also know as kojic acid, a by-product in the fermentation process of malting rice that acts as a chelation agent. Involved in the seretion of kojic acid. The chain is MFS-type transporter kojT from Aspergillus flavus (strain ATCC 200026 / FGSC A1120 / IAM 13836 / NRRL 3357 / JCM 12722 / SRRC 167).